Reading from the N-terminus, the 223-residue chain is Prolactin-3D4 (223 aa).

The first 28 residues, 1-28 (MQLTLTLSGSSMQLLLLVSNLLLWENMA), serve as a signal peptide directing secretion. Intrachain disulfides connect C80-C198 and C215-C223. N108 and N157 each carry an N-linked (GlcNAc...) asparagine glycan.

It belongs to the somatotropin/prolactin family. N-glycosylated.

It is found in the secreted. The chain is Prolactin-3D4 (Prl3d4) from Rattus norvegicus (Rat).